The chain runs to 882 residues: Valine--tRNA ligase (882 aa).

Positions 45 to 55 (PNVTGKLHLGH) match the 'HIGH' region motif. The short motif at 519 to 523 (KMSKS) is the 'KMSKS' region element. K522 provides a ligand contact to ATP. A coiled-coil region spans residues 808–877 (LADLLNVEEE…DATQERIVEM (70 aa)).

Belongs to the class-I aminoacyl-tRNA synthetase family. ValS type 1 subfamily. In terms of assembly, monomer.

Its subcellular location is the cytoplasm. It carries out the reaction tRNA(Val) + L-valine + ATP = L-valyl-tRNA(Val) + AMP + diphosphate. Its function is as follows. Catalyzes the attachment of valine to tRNA(Val). As ValRS can inadvertently accommodate and process structurally similar amino acids such as threonine, to avoid such errors, it has a 'posttransfer' editing activity that hydrolyzes mischarged Thr-tRNA(Val) in a tRNA-dependent manner. The sequence is that of Valine--tRNA ligase from Streptococcus pyogenes serotype M6 (strain ATCC BAA-946 / MGAS10394).